A 541-amino-acid chain; its full sequence is Membrane protein insertase YidC (541 aa).

Residues 6–26 traverse the membrane as a helical segment; that stretch reads SLLVLALIFISFLVYQQWQLD. Residues 34–56 form a disordered region; sequence EQTTSITATSDVPASSPSNSQAI. Helical transmembrane passes span 337–357, 416–436, 454–474, and 495–515; these read FWLL…IICV, LGGC…YWTF, LSAQ…MFLL, and PLVF…YWLV.

This sequence belongs to the OXA1/ALB3/YidC family. Type 1 subfamily. As to quaternary structure, interacts with the Sec translocase complex via SecD. Specifically interacts with transmembrane segments of nascent integral membrane proteins during membrane integration.

The protein resides in the cell inner membrane. Its function is as follows. Required for the insertion and/or proper folding and/or complex formation of integral membrane proteins into the membrane. Involved in integration of membrane proteins that insert both dependently and independently of the Sec translocase complex, as well as at least some lipoproteins. Aids folding of multispanning membrane proteins. This Haemophilus influenzae (strain ATCC 51907 / DSM 11121 / KW20 / Rd) protein is Membrane protein insertase YidC.